Consider the following 131-residue polypeptide: Small ribosomal subunit protein bS6 (131 aa).

Positions 92-131 (RVDEHKDGPSVQMQKRDERERGDRGDRGERRERRDRDDRN) are disordered.

This sequence belongs to the bacterial ribosomal protein bS6 family.

Binds together with bS18 to 16S ribosomal RNA. The sequence is that of Small ribosomal subunit protein bS6 from Paracoccus denitrificans (strain Pd 1222).